An 868-amino-acid chain; its full sequence is Aconitate hydratase B (868 aa).

Residues Arg-192, 235–237 (SSR), 404–406 (QDT), and Ser-488 each bind substrate. 3 residues coordinate [4Fe-4S] cluster: Cys-700, Cys-758, and Cys-761. Substrate is bound by residues Arg-780 and Arg-785.

Belongs to the aconitase/IPM isomerase family. In terms of assembly, monomer. The cofactor is [4Fe-4S] cluster.

It carries out the reaction citrate = D-threo-isocitrate. The catalysed reaction is (2S,3R)-3-hydroxybutane-1,2,3-tricarboxylate = 2-methyl-cis-aconitate + H2O. It participates in carbohydrate metabolism; tricarboxylic acid cycle; isocitrate from oxaloacetate: step 2/2. The protein operates within organic acid metabolism; propanoate degradation. In terms of biological role, involved in the catabolism of short chain fatty acids (SCFA) via the tricarboxylic acid (TCA)(acetyl degradation route) and probably via the 2-methylcitrate cycle I (propionate degradation route). Catalyzes the reversible isomerization of citrate to isocitrate via cis-aconitate. Catalyzes the hydration of 2-methyl-cis-aconitate to yield (2R,3S)-2-methylisocitrate. The apo form of AcnB functions as a RNA-binding regulatory protein. This Synechocystis sp. (strain ATCC 27184 / PCC 6803 / Kazusa) protein is Aconitate hydratase B (acnB).